A 1538-amino-acid chain; its full sequence is Pentafunctional AROM polypeptide (1538 aa).

Positions 1-384 are 3-dehydroquinate synthase; that stretch reads MGVPTKISIL…HEPRASTVSN (384 aa). NAD(+) is bound by residues 44-46, 81-84, 114-116, and Asp-119; these read DTN, ESSK, and GGV. Residue Arg-130 coordinates 7-phospho-2-dehydro-3-deoxy-D-arabino-heptonate. Position 139–140 (139–140) interacts with NAD(+); sequence TT. 7-phospho-2-dehydro-3-deoxy-D-arabino-heptonate contacts are provided by Asp-146 and Lys-152. Lys-161 provides a ligand contact to NAD(+). 7-phospho-2-dehydro-3-deoxy-D-arabino-heptonate is bound at residue Asn-162. NAD(+) contacts are provided by residues 179–182 and Asn-190; that span reads FLNT. Glu-194 contacts Zn(2+). 7-phospho-2-dehydro-3-deoxy-D-arabino-heptonate is bound by residues 194–197 and Lys-250; that span reads EVIK. The Proton acceptor; for 3-dehydroquinate synthase activity role is filled by Glu-260. 7-phospho-2-dehydro-3-deoxy-D-arabino-heptonate-binding positions include 264 to 268 and His-271; that span reads RNLLN. Zn(2+) is bound at residue His-271. The active-site Proton acceptor; for 3-dehydroquinate synthase activity is His-275. The 7-phospho-2-dehydro-3-deoxy-D-arabino-heptonate site is built by His-287 and Lys-356. His-287 contacts Zn(2+). The tract at residues 397-842 is EPSP synthase; it reads VSPGVPKGLD…WDCLSQTFKV (446 aa). Cys-824 serves as the catalytic For EPSP synthase activity. Positions 866–973 are shikimate kinase; the sequence is ASIFIIGMRG…RRKQNTFFVS (108 aa). Residue 872–879 coordinates ATP; it reads GMRGAGKT. A 3-dehydroquinase region spans residues 974–1194; the sequence is LTLPDLGLAA…AAPGQLSARE (221 aa). His-1097 acts as the Proton acceptor; for 3-dehydroquinate dehydratase activity in catalysis. The active-site Schiff-base intermediate with substrate; for 3-dehydroquinate dehydratase activity is the Lys-1125. Residues 1207–1538 are shikimate dehydrogenase; that stretch reads AKKFAVIGNP…YEHPVLNHSS (332 aa).

This sequence in the N-terminal section; belongs to the sugar phosphate cyclases superfamily. Dehydroquinate synthase family. The protein in the 2nd section; belongs to the EPSP synthase family. In the 3rd section; belongs to the shikimate kinase family. It in the 4th section; belongs to the type-I 3-dehydroquinase family. This sequence in the C-terminal section; belongs to the shikimate dehydrogenase family. As to quaternary structure, homodimer. Requires Zn(2+) as cofactor.

The protein localises to the cytoplasm. The enzyme catalyses 7-phospho-2-dehydro-3-deoxy-D-arabino-heptonate = 3-dehydroquinate + phosphate. It catalyses the reaction 3-dehydroquinate = 3-dehydroshikimate + H2O. The catalysed reaction is shikimate + NADP(+) = 3-dehydroshikimate + NADPH + H(+). It carries out the reaction shikimate + ATP = 3-phosphoshikimate + ADP + H(+). The enzyme catalyses 3-phosphoshikimate + phosphoenolpyruvate = 5-O-(1-carboxyvinyl)-3-phosphoshikimate + phosphate. The protein operates within metabolic intermediate biosynthesis; chorismate biosynthesis; chorismate from D-erythrose 4-phosphate and phosphoenolpyruvate: step 2/7. It participates in metabolic intermediate biosynthesis; chorismate biosynthesis; chorismate from D-erythrose 4-phosphate and phosphoenolpyruvate: step 3/7. Its pathway is metabolic intermediate biosynthesis; chorismate biosynthesis; chorismate from D-erythrose 4-phosphate and phosphoenolpyruvate: step 4/7. It functions in the pathway metabolic intermediate biosynthesis; chorismate biosynthesis; chorismate from D-erythrose 4-phosphate and phosphoenolpyruvate: step 5/7. The protein operates within metabolic intermediate biosynthesis; chorismate biosynthesis; chorismate from D-erythrose 4-phosphate and phosphoenolpyruvate: step 6/7. Its function is as follows. The AROM polypeptide catalyzes 5 consecutive enzymatic reactions in prechorismate polyaromatic amino acid biosynthesis. The chain is Pentafunctional AROM polypeptide from Ajellomyces capsulatus (strain NAm1 / WU24) (Darling's disease fungus).